We begin with the raw amino-acid sequence, 358 residues long: Anhydro-N-acetylmuramic acid kinase (358 aa).

Residue 9–16 (GTSLDGVD) participates in ATP binding.

The protein belongs to the anhydro-N-acetylmuramic acid kinase family.

It carries out the reaction 1,6-anhydro-N-acetyl-beta-muramate + ATP + H2O = N-acetyl-D-muramate 6-phosphate + ADP + H(+). It functions in the pathway amino-sugar metabolism; 1,6-anhydro-N-acetylmuramate degradation. Its pathway is cell wall biogenesis; peptidoglycan recycling. In terms of biological role, catalyzes the specific phosphorylation of 1,6-anhydro-N-acetylmuramic acid (anhMurNAc) with the simultaneous cleavage of the 1,6-anhydro ring, generating MurNAc-6-P. Is required for the utilization of anhMurNAc either imported from the medium or derived from its own cell wall murein, and thus plays a role in cell wall recycling. This Acidiphilium cryptum (strain JF-5) protein is Anhydro-N-acetylmuramic acid kinase.